The following is a 335-amino-acid chain: Fructose-1,6-bisphosphatase class 1 (335 aa).

Mg(2+) contacts are provided by glutamate 92, aspartate 114, leucine 116, and aspartate 117. Residues 117–120 (DGSS), asparagine 209, and lysine 275 contribute to the substrate site. Residue glutamate 281 participates in Mg(2+) binding.

Belongs to the FBPase class 1 family. In terms of assembly, homotetramer. The cofactor is Mg(2+).

The protein resides in the cytoplasm. The enzyme catalyses beta-D-fructose 1,6-bisphosphate + H2O = beta-D-fructose 6-phosphate + phosphate. It participates in carbohydrate biosynthesis; gluconeogenesis. This Verminephrobacter eiseniae (strain EF01-2) protein is Fructose-1,6-bisphosphatase class 1.